A 97-amino-acid polypeptide reads, in one-letter code: MEIKTTAVAGTLESSDIQIMISKGSDGIKIDLESEVKKAYGDQIEKVITETLKKYGLDNVNIKATDKGALDCVIKARTLAAAQRATETQDKPDLEVL.

Residue serine 14 is modified to O-(phosphoribosyl dephospho-coenzyme A)serine.

This sequence belongs to the CitD family. In terms of assembly, oligomer with a subunit composition of (alpha,beta,gamma)6.

It is found in the cytoplasm. Covalent carrier of the coenzyme of citrate lyase. In Lactobacillus acidophilus (strain ATCC 700396 / NCK56 / N2 / NCFM), this protein is Citrate lyase acyl carrier protein.